A 1014-amino-acid polypeptide reads, in one-letter code: Beta-galactosidase (1014 aa).

Glu460 acts as the Proton donor in catalysis. The active-site Nucleophile is the Glu527.

Belongs to the glycosyl hydrolase 2 family.

It catalyses the reaction Hydrolysis of terminal non-reducing beta-D-galactose residues in beta-D-galactosides.. This Halalkalibacterium halodurans (strain ATCC BAA-125 / DSM 18197 / FERM 7344 / JCM 9153 / C-125) (Bacillus halodurans) protein is Beta-galactosidase (lacZ).